The chain runs to 260 residues: Intermembrane phospholipid transport system permease protein MlaE (260 aa).

Residues 1 to 50 (MLLNALASLGHKGIKTLRTFGRAGLMLFNALVGKPEFRKHAPLLVRQLYN) lie on the Cytoplasmic side of the membrane. Residues 51 to 71 (VGVLSMLIIVVSGVFIGMVLG) traverse the membrane as a helical segment. Topologically, residues 72–88 (LQGYLVLTTYSAETSLG) are periplasmic. A helical transmembrane segment spans residues 89–109 (MLVALSLLRELGPVVAALLFA). Residues 110–147 (GRAGSALTAEIGLMRATEQLSSMEMMAVDPLRRVISPR) lie on the Cytoplasmic side of the membrane. The helical transmembrane segment at 148–168 (FWAGVISLPLLTVIFVAVGIW) threads the bilayer. Topologically, residues 169-198 (GGSLVGVSWKGIDSGFFWSAMQNAVDWRMD) are periplasmic. The helical transmembrane segment at 199-219 (LVNCLIKSVVFAITVTWISLF) threads the bilayer. Residues 220-238 (NGYDAIPTSAGISRATTRT) lie on the Cytoplasmic side of the membrane. The chain crosses the membrane as a helical span at residues 239 to 259 (VVHSSLAVLGLDFVLTALMFG). Asparagine 260 is a topological domain (periplasmic).

This sequence belongs to the MlaE permease family. In terms of assembly, the complex is composed of two ATP-binding proteins (MlaF), two transmembrane proteins (MlaE), two cytoplasmic solute-binding proteins (MlaB) and six periplasmic solute-binding proteins (MlaD).

The protein resides in the cell inner membrane. Functionally, part of the ABC transporter complex MlaFEDB, which is involved in a phospholipid transport pathway that maintains lipid asymmetry in the outer membrane by retrograde trafficking of phospholipids from the outer membrane to the inner membrane. Probably responsible for the translocation of the substrate across the membrane. This is Intermembrane phospholipid transport system permease protein MlaE from Escherichia coli O157:H7.